Reading from the N-terminus, the 598-residue chain is Fibulin-1 (598 aa).

Cystine bridges form between Ala1–Cys25, Cys7–Cys26, Cys28–Cys52, Cys29–Cys59, Cys42–Cys60, Cys96–Cys106, Cys102–Cys115, Cys117–Cys130, Cys136–Cys149, Cys143–Cys158, Cys164–Cys176, Cys182–Cys195, Cys189–Cys204, Cys210–Cys222, Cys228–Cys242, Cys257–Cys270, Cys275–Cys288, Cys282–Cys297, Cys299–Cys312, Cys318–Cys330, Cys326–Cys339, Cys341–Cys354, Cys360–Cys369, Cys365–Cys378, Cys380–Cys394, Cys400–Cys413, Cys409–Cys422, Cys424–Cys438, Cys444–Cys457, Cys451–Cys466, and Cys471–Cys483. Anaphylatoxin-like domains lie at 1–27 (ANEQDHCAAPRGDNASLEATFVKRCCH) and 28–60 (CCLLGRAAQAQGQSCEYNLMVGYQCGQVFRACC). Asn14 carries N-linked (GlcNAc...) asparagine glycosylation. The EGF-like 1 domain maps to 92 to 131 (LNDRCRGGGPCKQQCRDTGDEVVCSCFVGYQLLSDGVSCE). One can recognise an EGF-like 2; calcium-binding domain in the interval 132-177 (DVNECITGSHSCRLGESCINTVGSFRCQRDSSCGTGYELTEDNSCK). The region spanning 178–223 (DIDQCESGIHNCLPDFICQNTLGSFRCRPKLQCKNGFIQDALANCI) is the EGF-like 3; calcium-binding domain. Residues 224-270 (DINECLSIVSAPCPTGHTCINTEGSYTQKNVPNCGRGYHLNEEGTRC) form the EGF-like 4; calcium-binding domain. One can recognise an EGF-like 5; calcium-binding domain in the interval 271–313 (DVNECAPPAEPCGKGHRCVNSPGSFRCECKTGYYFDGISRMCV). A self-association and FN1-binding region spans residues 271–355 (DVNECAPPAE…RLSVDGRSCE (85 aa)). The 42-residue stretch at 314–355 (DVNECQRYPGRLCGHKCENTLGSYVCSCSVGFRLSVDGRSCE) folds into the EGF-like 6; calcium-binding domain. One can recognise an EGF-like 7; calcium-binding domain in the interval 356–395 (DINECSSSPCSQECANVYGSYQCYCRRGYQLSDVDGVTCE). Residues 396-439 (DIDECALPTGGHICSYRCINIPGSFQCSCPASGYRLAPNGRNCQ) form the EGF-like 8; calcium-binding domain. Residues 440–484 (DIDECVTGIHNCSINETCFNIQGGFRCLAFECPENYRRSAATRCE) form the EGF-like 9; calcium-binding domain. N-linked (GlcNAc...) asparagine glycosylation is found at Asn450 and Asn454.

Belongs to the fibulin family. As to quaternary structure, homomultimerizes and interacts with various extracellular matrix components. Interacts with FBLN7. Interacts with the mature/soluble form of DTR. Interacts with CCN3.

The protein localises to the secreted. It is found in the extracellular space. Its subcellular location is the extracellular matrix. In terms of biological role, incorporated into fibronectin-containing matrix fibers. May play a role in cell adhesion and migration along protein fibers within the extracellular matrix (ECM). Could be important for certain developmental processes and contribute to the supramolecular organization of ECM architecture, in particular to those of basement membranes. May serve to anchor the mature/soluble form of DTR to its fibers as it migrates through the extracellular matrix. The direct physical association with DTR may be useful in such tissue developmental processes as wound healing. The chain is Fibulin-1 (FBLN1) from Chlorocebus aethiops (Green monkey).